Reading from the N-terminus, the 335-residue chain is 3-isopropylmalate dehydrogenase (335 aa).

Residues Arg87, Arg97, Arg121, and Asp211 each coordinate substrate. Residues Asp211, Asp235, and Asp239 each contribute to the Mg(2+) site. 271–283 (GSAPDIAGQSKAD) contributes to the NAD(+) binding site.

This sequence belongs to the isocitrate and isopropylmalate dehydrogenases family. LeuB type 2 subfamily. In terms of assembly, homodimer. The cofactor is Mg(2+). It depends on Mn(2+) as a cofactor.

The protein localises to the cytoplasm. The catalysed reaction is (2R,3S)-3-isopropylmalate + NAD(+) = 4-methyl-2-oxopentanoate + CO2 + NADH. Its pathway is amino-acid biosynthesis; L-leucine biosynthesis; L-leucine from 3-methyl-2-oxobutanoate: step 3/4. In terms of biological role, catalyzes the oxidation of 3-carboxy-2-hydroxy-4-methylpentanoate (3-isopropylmalate) to 3-carboxy-4-methyl-2-oxopentanoate. The product decarboxylates to 4-methyl-2 oxopentanoate. In Nocardia farcinica (strain IFM 10152), this protein is 3-isopropylmalate dehydrogenase.